A 293-amino-acid chain; its full sequence is 33 kDa chaperonin (293 aa).

2 disulfides stabilise this stretch: cysteine 239–cysteine 241 and cysteine 272–cysteine 275.

It belongs to the HSP33 family. In terms of processing, under oxidizing conditions two disulfide bonds are formed involving the reactive cysteines. Under reducing conditions zinc is bound to the reactive cysteines and the protein is inactive.

The protein localises to the cytoplasm. Redox regulated molecular chaperone. Protects both thermally unfolding and oxidatively damaged proteins from irreversible aggregation. Plays an important role in the bacterial defense system toward oxidative stress. The sequence is that of 33 kDa chaperonin from Limosilactobacillus fermentum (strain NBRC 3956 / LMG 18251) (Lactobacillus fermentum).